We begin with the raw amino-acid sequence, 371 residues long: MKLSAFDFNLPSELIAQSPSSERDNSDLLIAAMPPIKTKFYNIIDYLKEGDLLVLNNSKVIKAKLHLWKNVTINLNQKLSDDSWSAFAKPTRKLHVNDEFYFDNHKVIITEKLVMGEIKVKFDLDNISVFEFLDKYGEMPLPVYIRRSHSLYHTTSTLCHTRENGYSEKLDAFFRRNDIKDKDNDIVYDNERYQTIYSQIEGSVAAPTAGLHFTNDILDKLKTKGIHTAFLTLHVGAGTFLPVKTENIHEHKMHTEYCSITPETAEIINKAKQERRRIIAVGTTTLRTVESFCNNGIIKAGSFETDIFITPGFKFQTADMLLTNFHFPKSTLFMLICAFAGFKEMHELYKYAIKEKMRFFSYGDATLLYRK.

It belongs to the QueA family. Monomer.

The protein localises to the cytoplasm. The catalysed reaction is 7-aminomethyl-7-carbaguanosine(34) in tRNA + S-adenosyl-L-methionine = epoxyqueuosine(34) in tRNA + adenine + L-methionine + 2 H(+). The protein operates within tRNA modification; tRNA-queuosine biosynthesis. In terms of biological role, transfers and isomerizes the ribose moiety from AdoMet to the 7-aminomethyl group of 7-deazaguanine (preQ1-tRNA) to give epoxyqueuosine (oQ-tRNA). The chain is S-adenosylmethionine:tRNA ribosyltransferase-isomerase from Rickettsia akari (strain Hartford).